Reading from the N-terminus, the 284-residue chain is MSDQAEPGFVRVRLDLSYDGKDFSGWAKQTSRRTVQGEIEDALRTVTRSSVTYDLTVAGRTDAGVHARGQVAHVDLPEAVWAEHEEKLLRRLAGRLPLDVRIWRAAPAPAGFNARFSALWRRYAYRVGDRPGGVDPLTRGHVLWHDRPLDLDAMNEAAALMVGEHDFAAYCKKREGATTIRTLQKLRWVRDPATGVLTATVQADAFCHNMVRALIGAALFVGDGRRPAAWPAEVLAAKVRDPGVHVVRPHGLTLEEVAYPADALLAARAAEARNVRTLPGAGCC.

The active-site Nucleophile is the Asp62. Tyr123 is a substrate binding site.

Belongs to the tRNA pseudouridine synthase TruA family. Homodimer.

It catalyses the reaction uridine(38/39/40) in tRNA = pseudouridine(38/39/40) in tRNA. Functionally, formation of pseudouridine at positions 38, 39 and 40 in the anticodon stem and loop of transfer RNAs. This Streptomyces griseus subsp. griseus (strain JCM 4626 / CBS 651.72 / NBRC 13350 / KCC S-0626 / ISP 5235) protein is tRNA pseudouridine synthase A.